Here is a 260-residue protein sequence, read N- to C-terminus: 14-3-3-like protein (260 aa).

Residues 240–260 (DMQDDGGDEIKEAAPKPDEQY) are disordered. Residues 247–260 (DEIKEAAPKPDEQY) are compositionally biased toward basic and acidic residues.

Belongs to the 14-3-3 family.

This chain is 14-3-3-like protein, found in Oenothera elata subsp. hookeri (Hooker's evening primrose).